Reading from the N-terminus, the 408-residue chain is GTPase HflX (408 aa).

Residues 198 to 361 (PRVSLVGYTN…LIVREMERHY (164 aa)) enclose the Hflx-type G domain. GTP contacts are provided by residues 204–211 (GYTNAGKS), 229–233 (FVTLD), 251–254 (DTVG), 317–320 (NKAD), and 339–341 (SAK). The Mg(2+) site is built by S211 and T231.

The protein belongs to the TRAFAC class OBG-HflX-like GTPase superfamily. HflX GTPase family. In terms of assembly, monomer. Associates with the 50S ribosomal subunit. Requires Mg(2+) as cofactor.

The protein localises to the cytoplasm. GTPase that associates with the 50S ribosomal subunit and may have a role during protein synthesis or ribosome biogenesis. The sequence is that of GTPase HflX from Spirochaeta thermophila (strain ATCC 49972 / DSM 6192 / RI 19.B1).